A 135-amino-acid polypeptide reads, in one-letter code: Holo-[acyl-carrier-protein] synthase (135 aa).

Residues aspartate 9 and glutamate 63 each contribute to the Mg(2+) site.

The protein belongs to the P-Pant transferase superfamily. AcpS family. It depends on Mg(2+) as a cofactor.

The protein resides in the cytoplasm. It catalyses the reaction apo-[ACP] + CoA = holo-[ACP] + adenosine 3',5'-bisphosphate + H(+). Transfers the 4'-phosphopantetheine moiety from coenzyme A to a Ser of acyl-carrier-protein. This is Holo-[acyl-carrier-protein] synthase from Paraburkholderia phymatum (strain DSM 17167 / CIP 108236 / LMG 21445 / STM815) (Burkholderia phymatum).